The following is a 421-amino-acid chain: Phosphoribosylamine--glycine ligase (421 aa).

The ATP-grasp domain maps to 108-314; sequence KEIMVKYNVP…FAQNIDDIMM (207 aa). 134–195 lines the ATP pocket; it reads IEEQGAPIVV…EEFLDGEEFS (62 aa). Positions 284 and 286 each coordinate Mg(2+).

Belongs to the GARS family. The cofactor is Mg(2+). Requires Mn(2+) as cofactor.

The catalysed reaction is 5-phospho-beta-D-ribosylamine + glycine + ATP = N(1)-(5-phospho-beta-D-ribosyl)glycinamide + ADP + phosphate + H(+). It functions in the pathway purine metabolism; IMP biosynthesis via de novo pathway; N(1)-(5-phospho-D-ribosyl)glycinamide from 5-phospho-alpha-D-ribose 1-diphosphate: step 2/2. The polypeptide is Phosphoribosylamine--glycine ligase (Streptococcus pyogenes serotype M1).